We begin with the raw amino-acid sequence, 305 residues long: D-alanine--D-alanine ligase (305 aa).

Residues R104–E300 form the ATP-grasp domain. Residue L131–T181 participates in ATP binding. The Mg(2+) site is built by D249, E267, and N269.

This sequence belongs to the D-alanine--D-alanine ligase family. Requires Mg(2+) as cofactor. It depends on Mn(2+) as a cofactor.

The protein localises to the cytoplasm. The catalysed reaction is 2 D-alanine + ATP = D-alanyl-D-alanine + ADP + phosphate + H(+). It functions in the pathway cell wall biogenesis; peptidoglycan biosynthesis. Its function is as follows. Cell wall formation. This chain is D-alanine--D-alanine ligase, found in Paramagnetospirillum magneticum (strain ATCC 700264 / AMB-1) (Magnetospirillum magneticum).